The following is a 217-amino-acid chain: Thiopurine S-methyltransferase (217 aa).

Trp11, Leu46, Glu67, and Arg122 together coordinate S-adenosyl-L-methionine.

This sequence belongs to the class I-like SAM-binding methyltransferase superfamily. TPMT family.

Its subcellular location is the cytoplasm. It catalyses the reaction S-adenosyl-L-methionine + a thiopurine = S-adenosyl-L-homocysteine + a thiopurine S-methylether.. In Vibrio vulnificus (strain YJ016), this protein is Thiopurine S-methyltransferase.